A 570-amino-acid chain; its full sequence is Urease subunit alpha (570 aa).

Residues 133–570 enclose the Urease domain; it reads GGIDNHIHYI…LPLAQLYNLF (438 aa). H138, H140, and K221 together coordinate Ni(2+). N6-carboxylysine is present on K221. Substrate is bound at residue H223. Ni(2+) contacts are provided by H250 and H276. H324 (proton donor) is an active-site residue. Residue D364 participates in Ni(2+) binding.

Belongs to the metallo-dependent hydrolases superfamily. Urease alpha subunit family. As to quaternary structure, heterotrimer of UreA (gamma), UreB (beta) and UreC (alpha) subunits. Three heterotrimers associate to form the active enzyme. Ni cation serves as cofactor. Post-translationally, carboxylation allows a single lysine to coordinate two nickel ions.

Its subcellular location is the cytoplasm. It carries out the reaction urea + 2 H2O + H(+) = hydrogencarbonate + 2 NH4(+). The protein operates within nitrogen metabolism; urea degradation; CO(2) and NH(3) from urea (urease route): step 1/1. The protein is Urease subunit alpha of Cytophaga hutchinsonii (strain ATCC 33406 / DSM 1761 / CIP 103989 / NBRC 15051 / NCIMB 9469 / D465).